The primary structure comprises 231 residues: Uridylate kinase (231 aa).

9-12 (KLSG) is an ATP binding site. Glycine 49 provides a ligand contact to UMP. ATP contacts are provided by glycine 50 and arginine 54. UMP-binding positions include aspartate 69 and 130-137 (AGMPYFST). ATP is bound by residues asparagine 158, tyrosine 164, and aspartate 167.

Belongs to the UMP kinase family. As to quaternary structure, homohexamer.

It is found in the cytoplasm. It catalyses the reaction UMP + ATP = UDP + ADP. The protein operates within pyrimidine metabolism; CTP biosynthesis via de novo pathway; UDP from UMP (UMPK route): step 1/1. Inhibited by UTP. In terms of biological role, catalyzes the reversible phosphorylation of UMP to UDP. The chain is Uridylate kinase from Tropheryma whipplei (strain Twist) (Whipple's bacillus).